Reading from the N-terminus, the 340-residue chain is Ribosomal RNA small subunit methyltransferase C (340 aa).

It belongs to the methyltransferase superfamily. RsmC family. As to quaternary structure, monomer.

Its subcellular location is the cytoplasm. It catalyses the reaction guanosine(1207) in 16S rRNA + S-adenosyl-L-methionine = N(2)-methylguanosine(1207) in 16S rRNA + S-adenosyl-L-homocysteine + H(+). Specifically methylates the guanine in position 1207 of 16S rRNA in the 30S particle. The polypeptide is Ribosomal RNA small subunit methyltransferase C (Vibrio vulnificus (strain CMCP6)).